A 145-amino-acid chain; its full sequence is Methyl-coenzyme M reductase I operon protein D (145 aa).

As to quaternary structure, MCR is composed of three subunits: alpha, beta, and gamma. The function of proteins C and D is not known.

In Methanothermobacter marburgensis (strain ATCC BAA-927 / DSM 2133 / JCM 14651 / NBRC 100331 / OCM 82 / Marburg) (Methanobacterium thermoautotrophicum), this protein is Methyl-coenzyme M reductase I operon protein D (mcrD).